Here is a 398-residue protein sequence, read N- to C-terminus: Succinate--CoA ligase [ADP-forming] subunit beta (398 aa).

The ATP-grasp domain occupies 9 to 254; it reads KALLHEFGVP…ETEEDAKEIE (246 aa). ATP-binding positions include lysine 46, 53–55, glutamate 109, serine 112, and glutamate 117; that span reads GRG. Mg(2+)-binding residues include asparagine 209 and aspartate 223. Substrate is bound by residues asparagine 274 and 331-333; that span reads GIM.

It belongs to the succinate/malate CoA ligase beta subunit family. As to quaternary structure, heterotetramer of two alpha and two beta subunits. Mg(2+) is required as a cofactor.

It catalyses the reaction succinate + ATP + CoA = succinyl-CoA + ADP + phosphate. The enzyme catalyses GTP + succinate + CoA = succinyl-CoA + GDP + phosphate. It functions in the pathway carbohydrate metabolism; tricarboxylic acid cycle; succinate from succinyl-CoA (ligase route): step 1/1. In terms of biological role, succinyl-CoA synthetase functions in the citric acid cycle (TCA), coupling the hydrolysis of succinyl-CoA to the synthesis of either ATP or GTP and thus represents the only step of substrate-level phosphorylation in the TCA. The beta subunit provides nucleotide specificity of the enzyme and binds the substrate succinate, while the binding sites for coenzyme A and phosphate are found in the alpha subunit. The sequence is that of Succinate--CoA ligase [ADP-forming] subunit beta from Bradyrhizobium sp. (strain BTAi1 / ATCC BAA-1182).